We begin with the raw amino-acid sequence, 110 residues long: Senescence associated gene 20 (110 aa).

The sequence is that of Senescence associated gene 20 from Arabidopsis thaliana (Mouse-ear cress).